The sequence spans 88 residues: Acyl-CoA-binding protein homolog (88 aa).

Residues 3–88 (PQADFDKAAG…AHELIEKYGL (86 aa)) form the ACB domain. An acyl-CoA contacts are provided by residues Lys-15, 30–34 (YGLYK), Lys-52, Lys-56, and Tyr-75.

The protein belongs to the ACBP family. In terms of tissue distribution, brain. Is selectively expressed in glial cells.

The protein resides in the endoplasmic reticulum. The protein localises to the golgi apparatus. Functionally, may play important functions in the control of brain and pituitary activities. May regulate GABA neurotransmission through a paracrine and/or autocrine mechanism. May not bind acyl-CoA esters. The polypeptide is Acyl-CoA-binding protein homolog (Pelophylax ridibundus (Marsh frog)).